We begin with the raw amino-acid sequence, 648 residues long: Beta-glucuronidase (648 aa).

Positions 1 to 22 (MSPRRSVCWFVLGQLLCSCAVA) are cleaved as a signal peptide. Asparagine 172 and asparagine 416 each carry an N-linked (GlcNAc...) asparagine glycan. Glutamate 447 functions as the Proton donor in the catalytic mechanism. The N-linked (GlcNAc...) asparagine glycan is linked to asparagine 627.

This sequence belongs to the glycosyl hydrolase 2 family. As to quaternary structure, homotetramer. Post-translationally, undergoes a post-transcriptional proteolytic cleavage near its C-terminal end, which reduces its size by approximately 3 kDa. The site of this cleavage has as yet not been determined.

Its subcellular location is the lysosome. It catalyses the reaction a beta-D-glucuronoside + H2O = D-glucuronate + an alcohol. Its activity is regulated as follows. Inhibited by L-aspartic acid. In terms of biological role, plays an important role in the degradation of dermatan and keratan sulfates. This chain is Beta-glucuronidase (Gusb), found in Rattus norvegicus (Rat).